The primary structure comprises 201 residues: Recombination protein RecR (201 aa).

The segment at 60–75 adopts a C4-type zinc-finger fold; the sequence is CSRCFHFTDAEECSIC. Positions 83-178 constitute a Toprim domain; it reads GEICVVETTA…RVSRIAYGIP (96 aa).

The protein belongs to the RecR family.

May play a role in DNA repair. It seems to be involved in an RecBC-independent recombinational process of DNA repair. It may act with RecF and RecO. In Syntrophobacter fumaroxidans (strain DSM 10017 / MPOB), this protein is Recombination protein RecR.